The following is a 106-amino-acid chain: UPF0145 protein Nmul_A0734 (106 aa).

The protein belongs to the UPF0145 family.

The polypeptide is UPF0145 protein Nmul_A0734 (Nitrosospira multiformis (strain ATCC 25196 / NCIMB 11849 / C 71)).